Consider the following 118-residue polypeptide: MPTIKQLIRNTRQPIRNVTKSPALRGCPQRRGTCTRVYTITPKKPNSALRKVARVRLTSGFEITAYIPGIGHNSQEHSVVLVRGGRVKDLPGVRYHIVRGTLDAVGVKDRQQGRSSAL.

The protein belongs to the universal ribosomal protein uS12 family. As to quaternary structure, part of the 30S ribosomal subunit.

The protein resides in the plastid. It localises to the chloroplast. Its function is as follows. With S4 and S5 plays an important role in translational accuracy. Located at the interface of the 30S and 50S subunits. This Helianthus annuus (Common sunflower) protein is Small ribosomal subunit protein uS12cz/uS12cy (rps12-A).